A 190-amino-acid polypeptide reads, in one-letter code: Probable chemoreceptor glutamine deamidase CheD (190 aa).

This sequence belongs to the CheD family.

The enzyme catalyses L-glutaminyl-[protein] + H2O = L-glutamyl-[protein] + NH4(+). Its function is as follows. Probably deamidates glutamine residues to glutamate on methyl-accepting chemotaxis receptors (MCPs), playing an important role in chemotaxis. This Acidiphilium cryptum (strain JF-5) protein is Probable chemoreceptor glutamine deamidase CheD.